Here is a 541-residue protein sequence, read N- to C-terminus: Chaperonin GroEL 2 (541 aa).

Residues 29 to 32, 86 to 90, G413, 477 to 479, and D493 contribute to the ATP site; these read TLGP, DGTTT, and NAA.

This sequence belongs to the chaperonin (HSP60) family. As to quaternary structure, forms a cylinder of 14 subunits composed of two heptameric rings stacked back-to-back. Interacts with the co-chaperonin GroES.

It localises to the cytoplasm. The catalysed reaction is ATP + H2O + a folded polypeptide = ADP + phosphate + an unfolded polypeptide.. Functionally, together with its co-chaperonin GroES, plays an essential role in assisting protein folding. The GroEL-GroES system forms a nano-cage that allows encapsulation of the non-native substrate proteins and provides a physical environment optimized to promote and accelerate protein folding. In Nocardioides sp. (strain ATCC BAA-499 / JS614), this protein is Chaperonin GroEL 2.